The primary structure comprises 546 residues: MAAKDVVFGDSARAKMVEGVNILANAVKVTLGPKGRNVVLERSFGGPTVTKDGVSVAKEIELKDKLQNMGAQMVKEVASKTSDNAGDGTTTATVLAQSIVREGMKYVASGMNPMDLKRGIDKAVFAAIEELRKISKPCTTNKEIAQVGAISANSDSSIGDRIAEAMDKVGKEGVITVEDGKSLQDELDVVEGMQFDRGYLSPYFINNPDKQVAVLENPFVLLHDKKVSNIRDLLPILEQVAKAGRPLLIIAEDVEGEALATLVVNNIRGILKTVAVKAPGFGDRRKAMLEDIAILTGGQVIAEETGLTLEKATLAELGQAKRIEVAKENTTIIDGAGEAANIEARVKQVRTQIEEATSDYDREKLQERVAKLAGGVAVIKVGAATEVEMKEKKARVEDALHATRAAVEEGIVAGGGVALIRARTAIAGLKGANADQDAGIKIVLRAMEEPLRQIVTNGGEEASVVVAAVAAGTGNYGYNAATGEYVDLVDAGVVDPTKVTRTALQNAASVAGLLLTTDAAVCELPKEDAPMAGGMPGGMGGMGMDM.

Residues 30–33 (TLGP), Lys51, 87–91 (DGTTT), Gly415, 479–481 (NAA), and Asp495 contribute to the ATP site.

Belongs to the chaperonin (HSP60) family. Forms a cylinder of 14 subunits composed of two heptameric rings stacked back-to-back. Interacts with the co-chaperonin GroES.

It localises to the cytoplasm. The enzyme catalyses ATP + H2O + a folded polypeptide = ADP + phosphate + an unfolded polypeptide.. In terms of biological role, together with its co-chaperonin GroES, plays an essential role in assisting protein folding. The GroEL-GroES system forms a nano-cage that allows encapsulation of the non-native substrate proteins and provides a physical environment optimized to promote and accelerate protein folding. The polypeptide is Chaperonin GroEL 1 (Paraburkholderia xenovorans (strain LB400)).